A 484-amino-acid polypeptide reads, in one-letter code: Calcium-dependent protein kinase 26 (484 aa).

In terms of domain architecture, Protein kinase spans 24–282 (YSLGHKLGQG…AHQVLRHPWI (259 aa)). Residues 30-38 (LGQGQFGTT) and K53 contribute to the ATP site. The active-site Proton acceptor is D148. S188 carries the phosphoserine modification. The interval 288–318 (APDRALDPAVLSRLKQFSAMNKLKQMALRVI) is autoinhibitory domain. EF-hand domains follow at residues 325–360 (EEIA…YGST), 361–396 (LKDT…LNKL), 397–432 (EREE…QGMS), and 436–466 (LEDV…GIVG). Residues D338, D340, S342, E349, D374, D376, S378, T380, E385, D410, D412, S414, Y416, E421, D444, D446, D448, R450, and E455 each coordinate Ca(2+).

Belongs to the protein kinase superfamily. Ser/Thr protein kinase family. CDPK subfamily.

The catalysed reaction is L-seryl-[protein] + ATP = O-phospho-L-seryl-[protein] + ADP + H(+). It catalyses the reaction L-threonyl-[protein] + ATP = O-phospho-L-threonyl-[protein] + ADP + H(+). Activated by calcium. Autophosphorylation may play an important role in the regulation of the kinase activity. May play a role in signal transduction pathways that involve calcium as a second messenger. The chain is Calcium-dependent protein kinase 26 (CPK26) from Arabidopsis thaliana (Mouse-ear cress).